A 268-amino-acid chain; its full sequence is Resolvase (268 aa).

The Tyr recombinase domain maps to 47 to 250 (ELPKYLLAPE…FALDVAARHR (204 aa)). Active-site residues include Arg82, Lys114, His202, Arg205, and His228. Tyr237 acts as the O-(3'-phospho-DNA)-tyrosine intermediate in catalysis.

It belongs to the 'phage' integrase family.

Its function is as follows. Acts as a repressor of transcription and as a site-specific resolvase that cleaves at the RfsF site. The chain is Resolvase (resD) from Escherichia coli (strain K12).